The sequence spans 892 residues: Inner centromere protein B (892 aa).

Disordered stretches follow at residues 50 to 124 (AEPE…KRMT), 160 to 182 (EHER…EMKT), 255 to 286 (LVNE…SLVV), 305 to 470 (KRES…PPPH), 502 to 555 (KRNT…RRED), 569 to 687 (QLEE…RERE), 702 to 760 (ERAA…AAAA), and 797 to 819 (NYGM…KPIP). The segment covering 60–69 (SQKRRRKKRT) has biased composition (basic residues). Residues 90-99 (SANWSSSVRR) are compositionally biased toward low complexity. The segment covering 259-272 (QPLNLSNESATPTG) has biased composition (polar residues). Over residues 305 to 315 (KRESMTREAVR) the composition is skewed to basic and acidic residues. The span at 316–326 (KSIRQSISKKK) shows a compositional bias: basic residues. Residues 332–343 (SSTSSQRSCHSS) show a composition bias toward low complexity. Residues 431–444 (RAVDELSDDERPSE) show a composition bias toward basic and acidic residues. Residues 455 to 470 (PSPPCPPSKIVKPPPH) are compositionally biased toward pro residues. 4 stretches are compositionally biased toward basic and acidic residues: residues 509–555 (PDPK…RRED), 569–602 (QLEE…EEKA), 609–687 (KKQE…RERE), and 702–754 (ERAA…KAKE). The interval 512 to 725 (KSEEKERQRL…EERKKREQQQ (214 aa)) is SAH. The tract at residues 802-876 (LNSDDSTDDE…RTSSAVWHSP (75 aa)) is IN box. Ser-869 and Ser-870 each carry phosphoserine.

The protein belongs to the INCENP family. As to quaternary structure, component of the CPC at least composed of survivin/birc5, incenp, cdca8/borealin and/or cdca9/dasra-A, and aurkb/aurora-B. Interacts (via C-terminus) with aurkb (via N-terminus and kinase domain). Interacts (via N-terminus) with birc5.1, birc5.2, cdca8 and cdca9. Interacts with mtus1.

The protein resides in the nucleus. Its subcellular location is the chromosome. It localises to the centromere. The protein localises to the cytoplasm. It is found in the cytoskeleton. The protein resides in the spindle. Its subcellular location is the midbody. It localises to the kinetochore. Its function is as follows. Component of the chromosomal passenger complex (CPC), a complex that acts as a key regulator of mitosis. The CPC complex has essential functions at the centromere in ensuring correct chromosome alignment and segregation and is required for chromatin-induced microtubule stabilization and spindle assembly. Acts as a scaffold regulating CPC localization and activity. The C-terminus associates with aurkb/aurora-B, the N-terminus associated with cdca8/borealin and/or cdca9/dasra-A tethers the CPC to the inner centromere, and the microtubule binding activity within the central SAH domain directs aurkb/aurora-B toward substrates near microtubules. Activates aurkb. The polypeptide is Inner centromere protein B (incenp-b) (Xenopus laevis (African clawed frog)).